A 127-amino-acid polypeptide reads, in one-letter code: Large ribosomal subunit protein bL21 (127 aa).

It belongs to the bacterial ribosomal protein bL21 family. As to quaternary structure, part of the 50S ribosomal subunit. Contacts protein L20.

Its function is as follows. This protein binds to 23S rRNA in the presence of protein L20. This chain is Large ribosomal subunit protein bL21, found in Synechococcus elongatus (strain ATCC 33912 / PCC 7942 / FACHB-805) (Anacystis nidulans R2).